A 334-amino-acid polypeptide reads, in one-letter code: Ornithine carbamoyltransferase (334 aa).

Residues 57-60 (STRT), Gln-84, Arg-108, and 135-138 (HPTQ) contribute to the carbamoyl phosphate site. Residues Asn-169, Asp-233, and 237–238 (SM) contribute to the L-ornithine site. Residues 275 to 276 (CL) and Arg-320 contribute to the carbamoyl phosphate site.

It belongs to the aspartate/ornithine carbamoyltransferase superfamily. OTCase family.

The protein localises to the cytoplasm. The catalysed reaction is carbamoyl phosphate + L-ornithine = L-citrulline + phosphate + H(+). Its pathway is amino-acid biosynthesis; L-arginine biosynthesis; L-arginine from L-ornithine and carbamoyl phosphate: step 1/3. Its function is as follows. Reversibly catalyzes the transfer of the carbamoyl group from carbamoyl phosphate (CP) to the N(epsilon) atom of ornithine (ORN) to produce L-citrulline. The chain is Ornithine carbamoyltransferase from Aeromonas salmonicida (strain A449).